The primary structure comprises 280 residues: Bis(5'-nucleosyl)-tetraphosphatase, symmetrical (280 aa).

The protein belongs to the Ap4A hydrolase family.

The catalysed reaction is P(1),P(4)-bis(5'-adenosyl) tetraphosphate + H2O = 2 ADP + 2 H(+). Its function is as follows. Hydrolyzes diadenosine 5',5'''-P1,P4-tetraphosphate to yield ADP. The polypeptide is Bis(5'-nucleosyl)-tetraphosphatase, symmetrical (Paracidovorax citrulli (strain AAC00-1) (Acidovorax citrulli)).